The primary structure comprises 331 residues: MRGYLVAIFLSAVFLYYVLHCILWGTNVYWVAPVEMKRRNKIQPCLSKPAFASLLRFHQFHPFLCAADFRKIASLYGSDKFDLPYGMRTSAEYFRLALSKLQSCDLFDEFDNIPCKKCVVVGNGGVLKNKTLGEKIDSYDVIIRMNNGPVLGHEEEVGRRTTFRLFYPESVFSDPIHNDPNTTMILTAFKPHDLRWLLELLMGDKINTNGFWKKPALNLIYKPYQIRILDPFIIRTAAYELLHFPKVFPKNQKPKHPTTGIIAITLAFYICHEVHLAGFKYNFSDLKSPLHYYGNATMSLMNKNAYHNVTAEQLFLKDIIEKNLVINLTQD.

Over 1-4 (MRGY) the chain is Cytoplasmic. The helical; Signal-anchor for type II membrane protein transmembrane segment at 5–25 (LVAIFLSAVFLYYVLHCILWG) threads the bilayer. The Lumenal segment spans residues 26–331 (TNVYWVAPVE…KNLVINLTQD (306 aa)). 6 N-linked (GlcNAc...) asparagine glycosylation sites follow: Asn129, Asn181, Asn282, Asn295, Asn308, and Asn327.

The protein belongs to the glycosyltransferase 29 family.

The protein resides in the golgi apparatus membrane. It catalyses the reaction a neolactoside nLc4Cer(d18:1(4E)) + CMP-N-acetyl-beta-neuraminate = a neolactoside IV(3)-alpha-NeuAc-nLc4Cer(d18:1(4E)) + CMP + H(+). The enzyme catalyses a beta-D-galactosyl-(1-&gt;4)-N-acetyl-beta-D-glucosaminyl derivative + CMP-N-acetyl-beta-neuraminate = an N-acetyl-alpha-neuraminyl-(2-&gt;3)-beta-D-galactosyl-(1-&gt;4)-N-acetyl-beta-D-glucosaminyl derivative + CMP + H(+). It carries out the reaction a neolactoside nLc6Cer(d18:1(4E)) + CMP-N-acetyl-beta-neuraminate = a neolactoside VI(3)-alpha-NeuNAc-nLc6Cer(d18:1(4E)) + CMP + H(+). Functionally, transfers the sialyl residue from CMP-N-acetyl-beta-neuraminate to the terminal galactose residue on sugar chains of glycoproteins and glycolipids. It's alpha-2,3-sialyltransferase activity is specific toward type II glycan chains (Galbeta1-4GlcNAc) on glycoproteins and glycolipids such as neolactosides nLc4Cer and nLc6Cer, whose sialyl-products serve as precursors for the Lewis X antigen. Critically involved in the synthesis of functional selectin ligands needed for neutrophil recruitment during inflammation and lymphocyte homing to the lymph nodes. The polypeptide is Type 2 lactosamine alpha-2,3-sialyltransferase (ST3GAL6) (Pan troglodytes (Chimpanzee)).